Reading from the N-terminus, the 483-residue chain is Coagulation factor X isoform 1 (483 aa).

A signal peptide spans 1-20 (MAPQLLLCLILTFLWSLPEA). Residues 21–40 (ESNVFLKSKVANRFLQRTKR) constitute a propeptide that is removed on maturation. Residues 41–86 (ANSLFEEFKSGNIERECIEERCSKEEAREAFEDDEKTETFWNVYVD) form the Gla domain. 4-carboxyglutamate is present on residues Glu-46, Glu-47, Glu-54, Glu-56, Glu-59, Glu-60, Glu-65, Glu-66, Glu-69, Glu-72, and Glu-75. Cysteines 57 and 62 form a disulfide. Positions 86–122 (DGDQCSSNPCHYGGTCKDGIGSYTCTCLSGYEGKNCE) constitute an EGF-like 1; calcium-binding domain. Disulfide bonds link Cys-90/Cys-101, Cys-95/Cys-110, Cys-112/Cys-121, Cys-129/Cys-140, Cys-136/Cys-149, Cys-151/Cys-164, Cys-172/Cys-345, Cys-245/Cys-250, Cys-265/Cys-281, Cys-393/Cys-407, and Cys-418/Cys-446. Residue Ser-92 is glycosylated (O-linked (Hex...) serine). At Asp-103 the chain carries (3R)-3-hydroxyaspartate. Positions 125 to 165 (LYKSCRVDNGDCWHFCKPVQNGIQCSCAESYLLGEDGHSCV) constitute an EGF-like 2 domain. The propeptide at 183 to 238 (EANLPDFQTDFSDDYDEIDENNFVETPTNFSGLVLTVQSQNATLLKKSDNPSPDIR) is activation peptide. Residues 239–470 (VVNGTDCKLG…FILWIKRIIR (232 aa)) form the Peptidase S1 domain. The active-site Charge relay system is the His-280. An N-linked (GlcNAc...) asparagine glycan is attached at Asn-283. The Charge relay system role is filled by Asp-325. The Charge relay system role is filled by Ser-422.

Belongs to the peptidase S1 family. As to quaternary structure, heterodimer of a light chain and a heavy chain; disulfide-linked. In terms of processing, gamma-carboxyglutamate residues are formed by vitamin K dependent carboxylation. These residues are essential for the binding of calcium. The activation peptide is cleaved by factor IXa (in the intrinsic pathway), or by factor VIIa (in the extrinsic pathway). Post-translationally, the iron and 2-oxoglutarate dependent 3-hydroxylation of aspartate and asparagine is (R) stereospecific within EGF domains. As to expression, plasma; synthesized in the liver.

Its subcellular location is the secreted. It carries out the reaction Selective cleavage of Arg-|-Thr and then Arg-|-Ile bonds in prothrombin to form thrombin.. Its function is as follows. Factor Xa is a vitamin K-dependent glycoprotein that converts prothrombin to thrombin in the presence of factor Va, calcium and phospholipid during blood clotting. The sequence is that of Coagulation factor X isoform 1 (F10) from Pseudonaja textilis (Eastern brown snake).